The chain runs to 87 residues: MAAYTSETAKFLQSVSSDQTWWKSRYNPGDSVPHSGIYRCTVCGKEITSNGNDPFPPQNHHQHSQQQAIKWQLIVRTDTKGDRFGIK.

Functionally, this protein inhibits the multiplication of double-stranded DNA phages, such as P1 and lambda. The chain is Protein L (L) from Escherichia coli.